The chain runs to 288 residues: Light-independent protochlorophyllide reductase iron-sulfur ATP-binding protein (288 aa).

ATP is bound by residues 12-17 (GIGKST) and lysine 41. Position 16 (serine 16) interacts with Mg(2+). Cysteine 97 and cysteine 131 together coordinate [4Fe-4S] cluster. Residue 182 to 183 (NR) participates in ATP binding.

The protein belongs to the NifH/BchL/ChlL family. As to quaternary structure, homodimer. Protochlorophyllide reductase is composed of three subunits; ChlL, ChlN and ChlB. It depends on [4Fe-4S] cluster as a cofactor.

It catalyses the reaction chlorophyllide a + oxidized 2[4Fe-4S]-[ferredoxin] + 2 ADP + 2 phosphate = protochlorophyllide a + reduced 2[4Fe-4S]-[ferredoxin] + 2 ATP + 2 H2O. Its pathway is porphyrin-containing compound metabolism; chlorophyll biosynthesis (light-independent). Functionally, component of the dark-operative protochlorophyllide reductase (DPOR) that uses Mg-ATP and reduced ferredoxin to reduce ring D of protochlorophyllide (Pchlide) to form chlorophyllide a (Chlide). This reaction is light-independent. The L component serves as a unique electron donor to the NB-component of the complex, and binds Mg-ATP. This Synechocystis sp. (strain ATCC 27184 / PCC 6803 / Kazusa) protein is Light-independent protochlorophyllide reductase iron-sulfur ATP-binding protein.